The sequence spans 448 residues: Glucose-6-phosphate isomerase (448 aa).

The active-site Proton donor is Glu290. Active-site residues include His311 and Lys425.

Belongs to the GPI family.

The protein resides in the cytoplasm. It carries out the reaction alpha-D-glucose 6-phosphate = beta-D-fructose 6-phosphate. Its pathway is carbohydrate biosynthesis; gluconeogenesis. It functions in the pathway carbohydrate degradation; glycolysis; D-glyceraldehyde 3-phosphate and glycerone phosphate from D-glucose: step 2/4. Catalyzes the reversible isomerization of glucose-6-phosphate to fructose-6-phosphate. In Latilactobacillus sakei subsp. sakei (strain 23K) (Lactobacillus sakei subsp. sakei), this protein is Glucose-6-phosphate isomerase.